A 213-amino-acid chain; its full sequence is Holliday junction branch migration complex subunit RuvA (213 aa).

Residues 1 to 69 are domain I; sequence MISYLKGIVA…EEIPLLYGFS (69 aa). The interval 70–148 is domain II; that stretch reads SPAERDLFRH…EWRKSAGFFV (79 aa). Positions 149–158 are flexible linker; sequence ATEGPAPGIL. The interval 158–213 is domain III; that stretch reads LEEVQMTLFALGYTAHEVSHALHVVSEDIGLPKDAYVEDWIKQAIAHLSSSEQVSH.

Belongs to the RuvA family. In terms of assembly, homotetramer. Forms an RuvA(8)-RuvB(12)-Holliday junction (HJ) complex. HJ DNA is sandwiched between 2 RuvA tetramers; dsDNA enters through RuvA and exits via RuvB. An RuvB hexamer assembles on each DNA strand where it exits the tetramer. Each RuvB hexamer is contacted by two RuvA subunits (via domain III) on 2 adjacent RuvB subunits; this complex drives branch migration. In the full resolvosome a probable DNA-RuvA(4)-RuvB(12)-RuvC(2) complex forms which resolves the HJ.

It localises to the cytoplasm. Functionally, the RuvA-RuvB-RuvC complex processes Holliday junction (HJ) DNA during genetic recombination and DNA repair, while the RuvA-RuvB complex plays an important role in the rescue of blocked DNA replication forks via replication fork reversal (RFR). RuvA specifically binds to HJ cruciform DNA, conferring on it an open structure. The RuvB hexamer acts as an ATP-dependent pump, pulling dsDNA into and through the RuvAB complex. HJ branch migration allows RuvC to scan DNA until it finds its consensus sequence, where it cleaves and resolves the cruciform DNA. The protein is Holliday junction branch migration complex subunit RuvA of Nostoc sp. (strain PCC 7120 / SAG 25.82 / UTEX 2576).